Here is a 398-residue protein sequence, read N- to C-terminus: Phosphoglycerate kinase (398 aa).

Residues 23-25 (DFN), arginine 38, 61-64 (HMGK), arginine 122, and arginine 155 contribute to the substrate site. ATP-binding positions include lysine 206, glycine 297, glutamate 328, and 354–357 (GGDS).

This sequence belongs to the phosphoglycerate kinase family. Monomer.

Its subcellular location is the cytoplasm. The enzyme catalyses (2R)-3-phosphoglycerate + ATP = (2R)-3-phospho-glyceroyl phosphate + ADP. It functions in the pathway carbohydrate degradation; glycolysis; pyruvate from D-glyceraldehyde 3-phosphate: step 2/5. This Clostridium botulinum (strain 657 / Type Ba4) protein is Phosphoglycerate kinase.